Consider the following 529-residue polypeptide: Probable DNA helicase MPN_340 (529 aa).

The UvrD-like helicase ATP-binding domain occupies 2–285 (EHLNQEQKAA…FYTTQNYRSI (284 aa)). Position 23 to 30 (23 to 30 (SGAGTGKT)) interacts with ATP.

The protein belongs to the helicase family. UvrD subfamily.

The enzyme catalyses Couples ATP hydrolysis with the unwinding of duplex DNA by translocating in the 3'-5' direction.. The catalysed reaction is ATP + H2O = ADP + phosphate + H(+). This is Probable DNA helicase MPN_340 from Mycoplasma pneumoniae (strain ATCC 29342 / M129 / Subtype 1) (Mycoplasmoides pneumoniae).